The chain runs to 334 residues: Nucleoid-associated protein ESA_01050 (334 aa).

It belongs to the YejK family.

The protein resides in the cytoplasm. Its subcellular location is the nucleoid. The chain is Nucleoid-associated protein ESA_01050 from Cronobacter sakazakii (strain ATCC BAA-894) (Enterobacter sakazakii).